The sequence spans 776 residues: Homoaconitase, mitochondrial (776 aa).

The transit peptide at 1-24 (MVALRRAVALNAVAIARLQTRALT) directs the protein to the mitochondrion. Cys392, Cys459, and Cys462 together coordinate [4Fe-4S] cluster.

This sequence belongs to the aconitase/IPM isomerase family. Requires [4Fe-4S] cluster as cofactor.

It is found in the mitochondrion. The catalysed reaction is (2R,3S)-homoisocitrate = cis-homoaconitate + H2O. It functions in the pathway amino-acid biosynthesis; L-lysine biosynthesis via AAA pathway; L-alpha-aminoadipate from 2-oxoglutarate: step 3/5. In terms of biological role, catalyzes the reversible hydration of cis-homoaconitate to (2R,3S)-homoisocitrate, a step in the alpha-aminoadipate pathway for lysine biosynthesis. This is Homoaconitase, mitochondrial (LYS4) from Gibberella zeae (strain ATCC MYA-4620 / CBS 123657 / FGSC 9075 / NRRL 31084 / PH-1) (Wheat head blight fungus).